The sequence spans 620 residues: 1-deoxy-D-xylulose-5-phosphate synthase (620 aa).

Thiamine diphosphate is bound by residues His-80 and 121 to 123; that span reads GHS. Asp-152 provides a ligand contact to Mg(2+). Thiamine diphosphate is bound by residues 153-154, Asn-181, Tyr-288, and Glu-370; that span reads GA. Asn-181 contributes to the Mg(2+) binding site.

The protein belongs to the transketolase family. DXPS subfamily. Homodimer. The cofactor is Mg(2+). It depends on thiamine diphosphate as a cofactor.

The catalysed reaction is D-glyceraldehyde 3-phosphate + pyruvate + H(+) = 1-deoxy-D-xylulose 5-phosphate + CO2. The protein operates within metabolic intermediate biosynthesis; 1-deoxy-D-xylulose 5-phosphate biosynthesis; 1-deoxy-D-xylulose 5-phosphate from D-glyceraldehyde 3-phosphate and pyruvate: step 1/1. Its function is as follows. Catalyzes the acyloin condensation reaction between C atoms 2 and 3 of pyruvate and glyceraldehyde 3-phosphate to yield 1-deoxy-D-xylulose-5-phosphate (DXP). This is 1-deoxy-D-xylulose-5-phosphate synthase from Sodalis glossinidius (strain morsitans).